Here is a 194-residue protein sequence, read N- to C-terminus: MALRELKVCLLGDTGVGKSSIVWRFVEDSFDPNINPTIGASFMTKTVQYQNELHKFLIWDTAGQERFRALAPMYYRGSAAAIIVYDITKEETFSTLKNWVKELRQHGPPNIVVAIAGNKCDLIDVREVMERDAKDYADSIHAIFVETSAKNAININELFIEISRRIPSTDANLPSGGKGFKLRRQPSEPKRSCC.

12–20 contacts GTP; the sequence is GDTGVGKSS. Positions 34–42 match the Effector region motif; the sequence is INPTIGASF. Residues 60-64, 118-121, and 148-150 each bind GTP; these read DTAGQ, NKCD, and SAK. The interval 174–194 is disordered; sequence PSGGKGFKLRRQPSEPKRSCC. Positions 185-194 are enriched in basic and acidic residues; that stretch reads QPSEPKRSCC. Residues Cys-193 and Cys-194 are each lipidated (S-geranylgeranyl cysteine).

The protein belongs to the small GTPase superfamily. Rab family. In terms of assembly, interacts directly with ZFYVE20. Binds EEA1. Interacts (in its GTP-bound form) with RABGEF1. Interacts (in its GTP-bound form) with RINL.

The protein resides in the endosome membrane. Its subcellular location is the cell membrane. It is found in the early endosome. It localises to the late endosome. The protein localises to the cell projection. The protein resides in the ruffle. Its subcellular location is the cytoplasmic vesicle. It is found in the phagosome. It localises to the phagosome membrane. Functionally, plays a role in endocytosis and intracellular protein transport. Mediates trafficking of TF from early endosomes to recycling endosomes. Required for NGF-mediated endocytosis of NTRK1, and subsequent neurite outgrowth. Binds GTP and GDP and has low GTPase activity. Alternates between a GTP-bound active form and a GDP-bound inactive form. The protein is Ras-related protein Rab-22A (RAB22A) of Homo sapiens (Human).